A 170-amino-acid chain; its full sequence is Ribosome maturation factor RimM (170 aa).

In terms of domain architecture, PRC barrel spans 97–170 (HPDEYYWVDL…RIVVDWDPEF (74 aa)).

The protein belongs to the RimM family. Binds ribosomal protein uS19.

It localises to the cytoplasm. An accessory protein needed during the final step in the assembly of 30S ribosomal subunit, possibly for assembly of the head region. Essential for efficient processing of 16S rRNA. May be needed both before and after RbfA during the maturation of 16S rRNA. It has affinity for free ribosomal 30S subunits but not for 70S ribosomes. The protein is Ribosome maturation factor RimM of Xylella fastidiosa (strain M23).